A 176-amino-acid chain; its full sequence is Ribosome rescue factor SmrB (176 aa).

Positions 93 to 168 (LDLHGYRQSE…GDAALLVLID (76 aa)) constitute a Smr domain.

The protein belongs to the SmrB family. As to quaternary structure, associates with collided ribosomes, but not with correctly translating polysomes.

Functionally, acts as a ribosome collision sensor. Detects stalled/collided disomes (pairs of ribosomes where the leading ribosome is stalled and a second ribosome has collided with it) and endonucleolytically cleaves mRNA at the 5' boundary of the stalled ribosome. Stalled/collided disomes form a new interface (primarily via the 30S subunits) that binds SmrB. Cleaved mRNA becomes available for tmRNA ligation, leading to ribosomal subunit dissociation and rescue of stalled ribosomes. This chain is Ribosome rescue factor SmrB, found in Shewanella sp. (strain W3-18-1).